The chain runs to 665 residues: F-box/LRR-repeat protein 3 (665 aa).

Positions Lys-11–Arg-60 constitute an F-box domain. LRR repeat units follow at residues Ser-61–Phe-81, Cys-82–Arg-108, Ser-109–Asn-134, Ala-135–Arg-159, Cys-160–Trp-185, Cys-186–Tyr-211, Ile-214–Gly-235, Cys-236–Ser-261, Cys-262–His-287, Cys-288–Asp-312, Gly-313–Lys-338, Cys-339–Cys-364, Cys-365–Ser-390, Cys-391–Asp-416, Ile-419–Ile-440, Cys-441–Arg-466, Ser-467–Tyr-492, Cys-493–Gly-517, Cys-518–Lys-543, Cys-544–Asp-569, and Ser-594–Ala-619.

The sequence is that of F-box/LRR-repeat protein 3 (FBL3) from Arabidopsis thaliana (Mouse-ear cress).